We begin with the raw amino-acid sequence, 417 residues long: Tryptophan synthase beta chain (417 aa).

Lys-99 carries the post-translational modification N6-(pyridoxal phosphate)lysine.

The protein belongs to the TrpB family. In terms of assembly, tetramer of two alpha and two beta chains. It depends on pyridoxal 5'-phosphate as a cofactor.

The catalysed reaction is (1S,2R)-1-C-(indol-3-yl)glycerol 3-phosphate + L-serine = D-glyceraldehyde 3-phosphate + L-tryptophan + H2O. It participates in amino-acid biosynthesis; L-tryptophan biosynthesis; L-tryptophan from chorismate: step 5/5. The beta subunit is responsible for the synthesis of L-tryptophan from indole and L-serine. In Corynebacterium glutamicum (strain R), this protein is Tryptophan synthase beta chain.